Reading from the N-terminus, the 570-residue chain is 2-succinyl-5-enolpyruvyl-6-hydroxy-3-cyclohexene-1-carboxylate synthase (570 aa).

The protein belongs to the TPP enzyme family. MenD subfamily. As to quaternary structure, homodimer. Mg(2+) serves as cofactor. It depends on Mn(2+) as a cofactor. Requires thiamine diphosphate as cofactor.

It carries out the reaction isochorismate + 2-oxoglutarate + H(+) = 5-enolpyruvoyl-6-hydroxy-2-succinyl-cyclohex-3-ene-1-carboxylate + CO2. It functions in the pathway quinol/quinone metabolism; 1,4-dihydroxy-2-naphthoate biosynthesis; 1,4-dihydroxy-2-naphthoate from chorismate: step 2/7. It participates in quinol/quinone metabolism; menaquinone biosynthesis. Functionally, catalyzes the thiamine diphosphate-dependent decarboxylation of 2-oxoglutarate and the subsequent addition of the resulting succinic semialdehyde-thiamine pyrophosphate anion to isochorismate to yield 2-succinyl-5-enolpyruvyl-6-hydroxy-3-cyclohexene-1-carboxylate (SEPHCHC). The polypeptide is 2-succinyl-5-enolpyruvyl-6-hydroxy-3-cyclohexene-1-carboxylate synthase (Vibrio cholerae serotype O1 (strain ATCC 39541 / Classical Ogawa 395 / O395)).